Consider the following 365-residue polypeptide: Tetratricopeptide repeat protein 19, mitochondrial (365 aa).

A mitochondrion-targeting transit peptide spans 1 to 52 (MFRLLRWRLGRTLLRAAGRRCGGCTARLLPERTGDAGTGAERLRTRGAPARG). 4 TPR repeats span residues 127–160 (TYTY…LLGG), 220–260 (ANTY…CQEI), 269–302 (IVLM…AREI), and 308–341 (HMVL…AELK).

Belongs to the TTC19 family. As to quaternary structure, binds to the mature mitochondrial complex III dimer, after the incorporation of the Rieske protein UQCRFS1. Interacts with UQCRC1 and UQCRFS1. Interacts with ZFYVE26 and CHMP4B. In terms of processing, proteolytically cleaved by PARL.

It localises to the mitochondrion inner membrane. Required for the preservation of the structural and functional integrity of mitochondrial respiratory complex III by allowing the physiological turnover of the Rieske protein UQCRFS1. Involved in the clearance of UQCRFS1 N-terminal fragments, which are produced upon incorporation into the complex III and whose presence is detrimental for its catalytic activity. The protein is Tetratricopeptide repeat protein 19, mitochondrial (Ttc19) of Mus musculus (Mouse).